A 135-amino-acid polypeptide reads, in one-letter code: Putative large ribosomal subunit protein eL32' (135 aa).

The protein belongs to the eukaryotic ribosomal protein eL32 family.

This chain is Putative large ribosomal subunit protein eL32' (Rpl32-ps), found in Mus musculus (Mouse).